The following is a 377-amino-acid chain: Glutamate 5-kinase (377 aa).

Lysine 20 serves as a coordination point for ATP. Substrate is bound by residues serine 60, aspartate 147, and asparagine 159. An ATP-binding site is contributed by 179 to 180; that stretch reads SD. In terms of domain architecture, PUA spans 281–355; the sequence is HGQLHLDAGA…GQSTSDLPEF (75 aa).

It belongs to the glutamate 5-kinase family.

The protein localises to the cytoplasm. It catalyses the reaction L-glutamate + ATP = L-glutamyl 5-phosphate + ADP. It participates in amino-acid biosynthesis; L-proline biosynthesis; L-glutamate 5-semialdehyde from L-glutamate: step 1/2. Catalyzes the transfer of a phosphate group to glutamate to form L-glutamate 5-phosphate. The polypeptide is Glutamate 5-kinase (Corynebacterium jeikeium (strain K411)).